Reading from the N-terminus, the 259-residue chain is Bisphosphoglycerate mutase (259 aa).

At serine 2 the chain carries N-acetylserine. Residues 10 to 17 (RHGEGAWN), 23 to 24 (CS), arginine 62, 89 to 92 (ERHY), arginine 100, and 116 to 117 (RR) contribute to the substrate site. Histidine 11 acts as the Tele-phosphohistidine intermediate in catalysis. The active-site Proton donor/acceptor is glutamate 89. At threonine 122 the chain carries Phosphothreonine. Residue 189 to 190 (GN) coordinates substrate.

The protein belongs to the phosphoglycerate mutase family. BPG-dependent PGAM subfamily. Homodimer.

It carries out the reaction (2R)-3-phospho-glyceroyl phosphate = (2R)-2,3-bisphosphoglycerate + H(+). The catalysed reaction is (2R)-2-phosphoglycerate = (2R)-3-phosphoglycerate. With respect to regulation, at alkaline pH BPGM favors the synthase reaction; however, at lower pH the phosphatase reaction is dominant. Inhibited by citrate. Plays a major role in regulating hemoglobin oxygen affinity by controlling the levels of its allosteric effector 2,3-bisphosphoglycerate (2,3-BPG). Also exhibits mutase (EC 5.4.2.11) activity. The polypeptide is Bisphosphoglycerate mutase (BPGM) (Bos taurus (Bovine)).